The chain runs to 518 residues: ATP synthase subunit beta 2 (518 aa).

Position 154–161 (154–161 (GGAGVGKT)) interacts with ATP. Residues 455–518 (IDEAKGKAKP…TDHAADTHES (64 aa)) form a disordered region. Composition is skewed to basic and acidic residues over residues 473 to 485 (PDSK…DPKP) and 507 to 518 (PETDHAADTHES).

This sequence belongs to the ATPase alpha/beta chains family. In terms of assembly, F-type ATPases have 2 components, CF(1) - the catalytic core - and CF(0) - the membrane proton channel. CF(1) has five subunits: alpha(3), beta(3), gamma(1), delta(1), epsilon(1). CF(0) has three main subunits: a(1), b(2) and c(9-12). The alpha and beta chains form an alternating ring which encloses part of the gamma chain. CF(1) is attached to CF(0) by a central stalk formed by the gamma and epsilon chains, while a peripheral stalk is formed by the delta and b chains.

The protein resides in the cell inner membrane. It carries out the reaction ATP + H2O + 4 H(+)(in) = ADP + phosphate + 5 H(+)(out). In terms of biological role, produces ATP from ADP in the presence of a proton gradient across the membrane. The catalytic sites are hosted primarily by the beta subunits. This Albidiferax ferrireducens (strain ATCC BAA-621 / DSM 15236 / T118) (Rhodoferax ferrireducens) protein is ATP synthase subunit beta 2.